We begin with the raw amino-acid sequence, 623 residues long: Vacuolar-sorting receptor 1 (623 aa).

The signal sequence occupies residues 1 to 22 (MKCWRLSAILFLGFMLTSLSTA). At 23 to 564 (RFVVEKNSLS…SKTASQAKST (542 aa)) the chain is on the lumenal side. The PA domain occupies 54 to 163 (QYGGSMAGNV…SFGEKLKDAI (110 aa)). An N-linked (GlcNAc...) asparagine glycan is attached at Asn-143. 2 EGF-like domains span residues 411–461 (ETNE…TTCE) and 464–511 (GHGR…KNCE). 6 cysteine pairs are disulfide-bonded: Cys-415-Cys-433, Cys-422-Cys-442, Cys-444-Cys-460, Cys-468-Cys-488, Cys-475-Cys-496, and Cys-498-Cys-510. The region spanning 512 to 554 (DIDECKDKKACQCPECSCKNTWGSYNCSCSGDLLYIKDQDTCI) is the EGF-like 3; calcium-binding domain. An N-linked (GlcNAc...) asparagine glycan is attached at Asn-537. A disulfide bridge links Cys-540 with Cys-553. A helical transmembrane segment spans residues 565–585 (WAAFWVVLIALAMIAGGGFLV). Residues 586–623 (YKYRIRQYMDSEIRAIMAQYMPLDSQEEGPNHVNHQRG) are Cytoplasmic-facing. A Tyrosine-based internalization motif motif is present at residues 605–608 (YMPL).

It belongs to the VSR (BP-80) family. In terms of assembly, interacts with the N-terminal propeptide of aleurein (proaleurein).

The protein localises to the membrane. Its subcellular location is the golgi apparatus membrane. It is found in the cytoplasmic vesicle. The protein resides in the clathrin-coated vesicle membrane. It localises to the prevacuolar compartment membrane. Vacuolar-sorting receptor (VSR) involved in clathrin-coated vesicles sorting from Golgi apparatus to vacuoles. Seems to binds preferentially proteins containing a N-terminal NPIR motif. The sequence is that of Vacuolar-sorting receptor 1 (BP80) from Pisum sativum (Garden pea).